The sequence spans 455 residues: MVLESLSSSLRETIRKITGSTYIDKNTVKEISKDLQRILLKADVNVQTVLNITKEMERRALEEKPPVGMAHQDYMVKIIYEELLKILGEPSNVELKPQTIMLVGLYGHGKTTSAGKLSRFFMKKGLSAGLIAADVHRYAAYEQLQQIAESVNAKFYGDPKEKDPVKIIKNGLEVLKDAQVKIIDTSGRDSLDSDLIEEIRRIKEAVKPDQVLMVIDATMGQQAGPESKAINDAVGVTGIIITKMDGTAKGGGALSAVAKMRVPIYFIGTGEHMDDMEIFDPKKFLSRLLGLGDLETLFETVKEANITEEEAQKSFEKLMTGKFNLKDMYDVWEKFSRPGLMKKLVDSLPLAKLPGSQKINDDQILTAEQKLQRYRIIMDSMTFQELENPEIINAKRITRIARGAGVREEDVRMLLKEFKAMKNNMKLMKGNRGFKKILQSNFRSGNFGLDDLGLK.

Residues 104 to 111 (GLYGHGKT), 184 to 188 (DTSGR), and 242 to 245 (TKMD) each bind GTP.

This sequence belongs to the GTP-binding SRP family. SRP54 subfamily. Part of the signal recognition particle protein translocation system, which is composed of SRP and FtsY. Archaeal SRP consists of a 7S RNA molecule of 300 nucleotides and two protein subunits: SRP54 and SRP19.

It localises to the cytoplasm. It catalyses the reaction GTP + H2O = GDP + phosphate + H(+). Its function is as follows. Involved in targeting and insertion of nascent membrane proteins into the cytoplasmic membrane. Binds to the hydrophobic signal sequence of the ribosome-nascent chain (RNC) as it emerges from the ribosomes. The SRP-RNC complex is then targeted to the cytoplasmic membrane where it interacts with the SRP receptor FtsY. The chain is Signal recognition particle 54 kDa protein from Thermoplasma volcanium (strain ATCC 51530 / DSM 4299 / JCM 9571 / NBRC 15438 / GSS1).